Here is a 364-residue protein sequence, read N- to C-terminus: Histidinol-phosphate aminotransferase (364 aa).

The interval 1–46 (MQPRDLSDHSPYVPGRGVEEVARDRGLDPDDLIKLSSNENPHGPSP) is disordered. Basic and acidic residues predominate over residues 17–33 (GVEEVARDRGLDPDDLI). At K222 the chain carries N6-(pyridoxal phosphate)lysine.

It belongs to the class-II pyridoxal-phosphate-dependent aminotransferase family. Histidinol-phosphate aminotransferase subfamily. Pyridoxal 5'-phosphate serves as cofactor.

The catalysed reaction is L-histidinol phosphate + 2-oxoglutarate = 3-(imidazol-4-yl)-2-oxopropyl phosphate + L-glutamate. Its pathway is amino-acid biosynthesis; L-histidine biosynthesis; L-histidine from 5-phospho-alpha-D-ribose 1-diphosphate: step 7/9. This is Histidinol-phosphate aminotransferase from Halorubrum lacusprofundi (strain ATCC 49239 / DSM 5036 / JCM 8891 / ACAM 34).